The following is a 440-amino-acid chain: MSAQSPQVRQPPATPTYILRGHAAAIHALQIFHQNLRLVSGDADGWIVVWDLVSKRPRATWKAHDGTVLEVKGFSFGNGAVTEVFTHGRDHKLRVWRFSLQDEESLQKVLPVDIEKTSSTAASQPWLVHSLPVNALNFCAFSMVFLPPDKANTASDASEAPKENTSLSSVLIAVPNALNSGAIDLFHLPQERRICTIPADTEVQTGMVMAANLVISPSGELYVASAYEDGRVMVHGCRGSLQEKDLTQSTKTPWKWEKLYVCRAHSQPVLSLHVSPAGNYFFSSSADAVLAKHPIPSLGSPGHAPEELPIRSINTKHAGQQGVRIRSDGKIFATAGWDSRVRVYSCKTMKELAVLKWHKDGCYAVAFADVDVFEVREKSDEEKPTVSPNDNGNQENQLAGRAETEFSLATVHRQRYEKVQNTHWLAAGSKDGKISLWDIY.

WD repeat units follow at residues 21–60 (GHAAAIHALQIFHQNLRLVSGDADGWIVVWDLVSKRPRAT), 66–107 (GTVL…ESLQ), 205–245 (TGMV…QEKD), 264–303 (AHSQPVLSLHVSPAGNYFFSSSADAVLAKHPIPSLGSPGH), 315–354 (TKHAGQQGVRIRSDGKIFATAGWDSRVRVYSCKTMKELAV), and 406–440 (FSLATVHRQRYEKVQNTHWLAAGSKDGKISLWDIY).

This sequence belongs to the WD repeat ASA1 family. As to quaternary structure, component of the ASTRA chromatin remodeling machinery complex.

Its subcellular location is the nucleus. Its function is as follows. Component of the ASTRA complex involved in chromatin remodeling. The chain is ASTRA-associated protein 1 (asa1) from Aspergillus niger (strain ATCC MYA-4892 / CBS 513.88 / FGSC A1513).